A 399-amino-acid chain; its full sequence is Elongation factor Tu 1 (399 aa).

The tr-type G domain occupies K17–R208. Positions G26–T33 are G1. G26 to T33 is a GTP binding site. T33 provides a ligand contact to Mg(2+). Residues G62–A66 are G2. The tract at residues D83–G86 is G3. GTP contacts are provided by residues D83 to H87 and N138 to D141. The interval N138–D141 is G4. The segment at S175–L177 is G5.

It belongs to the TRAFAC class translation factor GTPase superfamily. Classic translation factor GTPase family. EF-Tu/EF-1A subfamily. In terms of assembly, monomer.

The protein localises to the cytoplasm. It catalyses the reaction GTP + H2O = GDP + phosphate + H(+). Functionally, GTP hydrolase that promotes the GTP-dependent binding of aminoacyl-tRNA to the A-site of ribosomes during protein biosynthesis. The sequence is that of Elongation factor Tu 1 from Wolbachia sp. subsp. Brugia malayi (strain TRS).